The following is a 269-amino-acid chain: Staphylococcal secretory antigen ssaA2 (269 aa).

Residues 1–27 (MKKIATATIATAGFATIAIASGNQAHA) form the signal peptide. 7 repeat units span residues 83–85 (YNN), 88–90 (YNN), 91–93 (YNN), 97–99 (YNN), 103–105 (YNN), 106–108 (YSN), and 115–117 (YNN). Residues 83–115 (YNNYSYNNYNNGYSYNNYSRYNNYSNNNQSYNY) form a 7 X 3 AA repeats of Y-[NS]-N region. Residues 148-269 (MAPSSNGRSI…SQAAGYNFIH (122 aa)) form the Peptidase C51 domain.

It localises to the secreted. In terms of biological role, not known; immunogenic protein. In Staphylococcus aureus (strain MRSA252), this protein is Staphylococcal secretory antigen ssaA2 (ssaA2).